The following is an 880-amino-acid chain: DNA mismatch repair protein MutS (880 aa).

625-632 (GPNMAGKS) is a binding site for ATP.

Belongs to the DNA mismatch repair MutS family.

This protein is involved in the repair of mismatches in DNA. It is possible that it carries out the mismatch recognition step. This protein has a weak ATPase activity. In Alkaliphilus oremlandii (strain OhILAs) (Clostridium oremlandii (strain OhILAs)), this protein is DNA mismatch repair protein MutS.